The following is a 205-amino-acid chain: Holliday junction branch migration complex subunit RuvA (205 aa).

The tract at residues 1–64 (MIGRLRGIIL…EDAQLLFGFI (64 aa)) is domain I. The segment at 65–143 (HKQERVLFRE…GLSGDLFVPQ (79 aa)) is domain II. Residues 144-156 (GAGEIPAAIDAPA) form a flexible linker region. The segment at 157–205 (MPADPEGEAVAALVALGYKPQEASRMVSKVASAGSDCEMLIRDALRAAL) is domain III.

It belongs to the RuvA family. In terms of assembly, homotetramer. Forms an RuvA(8)-RuvB(12)-Holliday junction (HJ) complex. HJ DNA is sandwiched between 2 RuvA tetramers; dsDNA enters through RuvA and exits via RuvB. An RuvB hexamer assembles on each DNA strand where it exits the tetramer. Each RuvB hexamer is contacted by two RuvA subunits (via domain III) on 2 adjacent RuvB subunits; this complex drives branch migration. In the full resolvosome a probable DNA-RuvA(4)-RuvB(12)-RuvC(2) complex forms which resolves the HJ.

It localises to the cytoplasm. Its function is as follows. The RuvA-RuvB-RuvC complex processes Holliday junction (HJ) DNA during genetic recombination and DNA repair, while the RuvA-RuvB complex plays an important role in the rescue of blocked DNA replication forks via replication fork reversal (RFR). RuvA specifically binds to HJ cruciform DNA, conferring on it an open structure. The RuvB hexamer acts as an ATP-dependent pump, pulling dsDNA into and through the RuvAB complex. HJ branch migration allows RuvC to scan DNA until it finds its consensus sequence, where it cleaves and resolves the cruciform DNA. This is Holliday junction branch migration complex subunit RuvA from Sodalis glossinidius (strain morsitans).